The following is a 178-amino-acid chain: Cell division protein SepF (178 aa).

A compositionally biased stretch (basic and acidic residues) spans 21–46 (YESEQSVATHHDEERPQAQEREERRA). The interval 21 to 65 (YESEQSVATHHDEERPQAQEREERRAPAPVREVVREMPTVDAEEE) is disordered.

The protein belongs to the SepF family. In terms of assembly, homodimer. Interacts with FtsZ.

The protein resides in the cytoplasm. Cell division protein that is part of the divisome complex and is recruited early to the Z-ring. Probably stimulates Z-ring formation, perhaps through the cross-linking of FtsZ protofilaments. Its function overlaps with FtsA. This Paenarthrobacter aurescens (strain TC1) protein is Cell division protein SepF.